The chain runs to 214 residues: Probable transaldolase (214 aa).

K83 acts as the Schiff-base intermediate with substrate in catalysis.

It belongs to the transaldolase family. Type 3B subfamily.

The protein resides in the cytoplasm. It catalyses the reaction D-sedoheptulose 7-phosphate + D-glyceraldehyde 3-phosphate = D-erythrose 4-phosphate + beta-D-fructose 6-phosphate. Its pathway is carbohydrate degradation; pentose phosphate pathway; D-glyceraldehyde 3-phosphate and beta-D-fructose 6-phosphate from D-ribose 5-phosphate and D-xylulose 5-phosphate (non-oxidative stage): step 2/3. Its function is as follows. Transaldolase is important for the balance of metabolites in the pentose-phosphate pathway. The protein is Probable transaldolase of Clostridium botulinum (strain Alaska E43 / Type E3).